The primary structure comprises 72 residues: Putative snRNP Sm-like protein (72 aa).

The Sm domain maps to 4–72 (RPLDILNNAL…RGDNVVYVSP (69 aa)).

It belongs to the snRNP Sm proteins family.

In Methanosarcina acetivorans (strain ATCC 35395 / DSM 2834 / JCM 12185 / C2A), this protein is Putative snRNP Sm-like protein.